We begin with the raw amino-acid sequence, 360 residues long: UDP-N-acetylglucosamine--N-acetylmuramyl-(pentapeptide) pyrophosphoryl-undecaprenol N-acetylglucosamine transferase (360 aa).

2 residues coordinate UDP-N-acetyl-alpha-D-glucosamine: serine 198 and glutamine 289.

It belongs to the glycosyltransferase 28 family. MurG subfamily.

It localises to the cell membrane. The catalysed reaction is Mur2Ac(oyl-L-Ala-gamma-D-Glu-L-Lys-D-Ala-D-Ala)-di-trans,octa-cis-undecaprenyl diphosphate + UDP-N-acetyl-alpha-D-glucosamine = beta-D-GlcNAc-(1-&gt;4)-Mur2Ac(oyl-L-Ala-gamma-D-Glu-L-Lys-D-Ala-D-Ala)-di-trans,octa-cis-undecaprenyl diphosphate + UDP + H(+). Its pathway is cell wall biogenesis; peptidoglycan biosynthesis. Its function is as follows. Cell wall formation. Catalyzes the transfer of a GlcNAc subunit on undecaprenyl-pyrophosphoryl-MurNAc-pentapeptide (lipid intermediate I) to form undecaprenyl-pyrophosphoryl-MurNAc-(pentapeptide)GlcNAc (lipid intermediate II). In Streptococcus pyogenes serotype M49 (strain NZ131), this protein is UDP-N-acetylglucosamine--N-acetylmuramyl-(pentapeptide) pyrophosphoryl-undecaprenol N-acetylglucosamine transferase.